A 286-amino-acid polypeptide reads, in one-letter code: Bark leucoagglutinin (286 aa).

Residues 1-28 form the signal peptide; the sequence is ATSNSKPTQVLLATFLTFFFLLLNNVNS. Y73 contacts N-acetyl-alpha-neuraminyl-(2-&gt;3)-beta-D-galactosyl-(1-&gt;4)-beta-D-glucose. N89 is a glycosylation site (N-linked (GlcNAc...) asparagine). 2 residues coordinate N-acetyl-alpha-neuraminyl-(2-&gt;3)-beta-D-galactosyl-(1-&gt;4)-beta-D-glucose: D115 and K135. Residue N141 is glycosylated (N-linked (GlcNAc...) asparagine). Residues E155 and D157 each coordinate Mn(2+). Residues D157, Y159, D165, and D168 each coordinate Ca(2+). Residues Y159 and D165 each coordinate N-acetyl-alpha-neuraminyl-(2-&gt;3)-beta-D-galactosyl-(1-&gt;4)-beta-D-glucose. Positions 168 and 173 each coordinate Mn(2+). Residues N207 and N219 are each glycosylated (N-linked (GlcNAc...) asparagine). A propeptide spans 278–286 (removed in mature form); the sequence is NVHIARYTA.

It belongs to the leguminous lectin family.

Sialic acid-binding lectin specifically recognizing the trisaccharide sequence Neu5Ac/Gc-alpha-2,3-Gal-beta-1,4-GlcNAc/Glc. In Maackia amurensis (Amur maackia), this protein is Bark leucoagglutinin.